The chain runs to 158 residues: NAD(P)H-quinone oxidoreductase subunit J, chloroplastic (158 aa).

Belongs to the complex I 30 kDa subunit family. As to quaternary structure, NDH is composed of at least 16 different subunits, 5 of which are encoded in the nucleus.

The protein localises to the plastid. It localises to the chloroplast thylakoid membrane. The catalysed reaction is a plastoquinone + NADH + (n+1) H(+)(in) = a plastoquinol + NAD(+) + n H(+)(out). It catalyses the reaction a plastoquinone + NADPH + (n+1) H(+)(in) = a plastoquinol + NADP(+) + n H(+)(out). NDH shuttles electrons from NAD(P)H:plastoquinone, via FMN and iron-sulfur (Fe-S) centers, to quinones in the photosynthetic chain and possibly in a chloroplast respiratory chain. The immediate electron acceptor for the enzyme in this species is believed to be plastoquinone. Couples the redox reaction to proton translocation, and thus conserves the redox energy in a proton gradient. The sequence is that of NAD(P)H-quinone oxidoreductase subunit J, chloroplastic from Pelargonium hortorum (Common geranium).